A 161-amino-acid polypeptide reads, in one-letter code: Nucleotide-binding protein NE2248 (161 aa).

This sequence belongs to the YajQ family.

In terms of biological role, nucleotide-binding protein. The sequence is that of Nucleotide-binding protein NE2248 from Nitrosomonas europaea (strain ATCC 19718 / CIP 103999 / KCTC 2705 / NBRC 14298).